Here is a 270-residue protein sequence, read N- to C-terminus: Glucosamine-6-phosphate deaminase (270 aa).

Residue aspartate 72 is the Proton acceptor; for enolization step of the active site. Aspartate 141 serves as the catalytic For ring-opening step. The active-site Proton acceptor; for ring-opening step is histidine 143. Glutamate 148 (for ring-opening step) is an active-site residue.

The protein belongs to the glucosamine/galactosamine-6-phosphate isomerase family. NagB subfamily. Homohexamer.

The enzyme catalyses alpha-D-glucosamine 6-phosphate + H2O = beta-D-fructose 6-phosphate + NH4(+). It functions in the pathway amino-sugar metabolism; N-acetylneuraminate degradation; D-fructose 6-phosphate from N-acetylneuraminate: step 5/5. Its activity is regulated as follows. Allosterically activated by N-acetylglucosamine 6-phosphate (GlcNAc6P). Functionally, catalyzes the reversible isomerization-deamination of glucosamine 6-phosphate (GlcN6P) to form fructose 6-phosphate (Fru6P) and ammonium ion. The protein is Glucosamine-6-phosphate deaminase of Haemophilus influenzae (strain PittEE).